The chain runs to 439 residues: Probable aspartic proteinase GIP2 (439 aa).

An N-terminal signal peptide occupies residues 1–23 (MASSCCLHAILLCSLLFITSTTA). In terms of domain architecture, Peptidase A1 spans 47 to 420 (YLTQIQQRTP…DLARSRLGFT (374 aa)). N-linked (GlcNAc...) asparagine glycosylation is found at Asn116, Asn280, Asn323, and Asn434.

It belongs to the peptidase A1 family. As to quaternary structure, interacts with the Phytophtora parasitica xyloglucanase XEG1 and xyloglucanase-like XLP1. Possesses stronger binding affinity with XLP1, a truncated paralog of P.parasitica XEG1 which has no enzyme activity.

The protein localises to the secreted. It is found in the extracellular space. Its subcellular location is the apoplast. Its function is as follows. Involved in plant defense against Phytophtora parasitica. Contributes positively to Nicotiana resistance against P.parasitica. Binds the P.parasitica xyloglucanase XEG1 and inhibits its cell wall degrading enzyme activity and its contribution as P.parasitica virulence factor. XEG1 acts as an important virulence factor during P.parasitica infection but also acts as a pathogen-associated molecular pattern (PAMP) in Nictotiana species, where it can trigger defense responses including cell death. In terms of biological role, (Microbial infection) Possesses stronger binding affinity with XLP1, a truncated paralog of P.parasitica XEG1 which has no enzyme activity. Is impaired in its inhibitor activity towards the P.parasitica xyloglucanase XEG1 when hijacked by XLP1 binding. The chain is Probable aspartic proteinase GIP2 from Nicotiana benthamiana.